The following is a 330-amino-acid chain: Ketol-acid reductoisomerase (NADP(+)) (330 aa).

A KARI N-terminal Rossmann domain is found at 1–181 (MNVYYEQDAD…GGAKAGVIET (181 aa)). NADP(+) is bound by residues 24-27 (YGSQ), R47, S50, S52, and 82-85 (DQYQ). The active site involves H107. G133 is an NADP(+) binding site. In terms of domain architecture, KARI C-terminal knotted spans 182-327 (TIKDETETDL…AKLRNMMSWL (146 aa)). D190, E194, E226, and E230 together coordinate Mg(2+). S251 provides a ligand contact to substrate.

The protein belongs to the ketol-acid reductoisomerase family. Mg(2+) is required as a cofactor.

The catalysed reaction is (2R)-2,3-dihydroxy-3-methylbutanoate + NADP(+) = (2S)-2-acetolactate + NADPH + H(+). It catalyses the reaction (2R,3R)-2,3-dihydroxy-3-methylpentanoate + NADP(+) = (S)-2-ethyl-2-hydroxy-3-oxobutanoate + NADPH + H(+). It functions in the pathway amino-acid biosynthesis; L-isoleucine biosynthesis; L-isoleucine from 2-oxobutanoate: step 2/4. The protein operates within amino-acid biosynthesis; L-valine biosynthesis; L-valine from pyruvate: step 2/4. Functionally, involved in the biosynthesis of branched-chain amino acids (BCAA). Catalyzes an alkyl-migration followed by a ketol-acid reduction of (S)-2-acetolactate (S2AL) to yield (R)-2,3-dihydroxy-isovalerate. In the isomerase reaction, S2AL is rearranged via a Mg-dependent methyl migration to produce 3-hydroxy-3-methyl-2-ketobutyrate (HMKB). In the reductase reaction, this 2-ketoacid undergoes a metal-dependent reduction by NADPH to yield (R)-2,3-dihydroxy-isovalerate. The sequence is that of Ketol-acid reductoisomerase (NADP(+)) from Prosthecochloris aestuarii (strain DSM 271 / SK 413).